Here is a 217-residue protein sequence, read N- to C-terminus: Putative thymidylate synthase (217 aa).

The active site involves C139.

This sequence belongs to the thymidylate synthase family. Archaeal-type ThyA subfamily. In terms of assembly, monomer.

Its subcellular location is the cytoplasm. It functions in the pathway pyrimidine metabolism; dTTP biosynthesis. Functionally, may catalyze the biosynthesis of dTMP using an unknown cosubstrate. The sequence is that of Putative thymidylate synthase from Methanosarcina mazei (strain ATCC BAA-159 / DSM 3647 / Goe1 / Go1 / JCM 11833 / OCM 88) (Methanosarcina frisia).